The primary structure comprises 392 residues: Tryptophan 2,3-dioxygenase (392 aa).

Substrate-binding positions include Phe-57–His-61 and Arg-128. Residue His-313 coordinates heme. Thr-328 provides a ligand contact to substrate.

It belongs to the tryptophan 2,3-dioxygenase family. In terms of assembly, homotetramer. Dimer of dimers. Heme is required as a cofactor.

It catalyses the reaction L-tryptophan + O2 = N-formyl-L-kynurenine. It functions in the pathway amino-acid degradation; L-tryptophan degradation via kynurenine pathway; L-kynurenine from L-tryptophan: step 1/2. The protein operates within pigment biosynthesis; ommochrome biosynthesis. In terms of biological role, heme-dependent dioxygenase that catalyzes the oxidative cleavage of the L-tryptophan (L-Trp) pyrrole ring and converts L-tryptophan to N-formyl-L-kynurenine. Catalyzes the oxidative cleavage of the indole moiety. This chain is Tryptophan 2,3-dioxygenase, found in Anopheles gambiae (African malaria mosquito).